A 390-amino-acid chain; its full sequence is MADQTAAAVVVGGGAAATMGEPSPPPPAPAAEAAGVGVGQQQRTVPTPFLTKTYQLVDDPAVDDVISWNDDGSTFVVWRPAEFARDLLPKYFKHNNFSSFVRQLNTYGFRKIVPDRWEFANDCFRRGERRLLCEIHRRKVTPPAPAATTAAVAAAIPMALPVTTTRDGSPVLSGEEQVISSSSSPEPPLVLPQAPSGSGSGGVASGDVGDENERLRRENAQLARELSQMRKLCNNILLLMSKYASTQQLDAANASSAAGNNNNNNCSGESAEAATPLPLPAVLDLMPSCPGAASAAAPVSDNEEGMMSAKLFGVSIGRKRMRHDGGGDDDHAATVKAEPMDGRPHGKDEQSAETQAWPIYRPRPVYQPIRACNGYEYDRAGSDQDGSNST.

The interval 165–212 is disordered; that stretch reads TRDGSPVLSGEEQVISSSSSPEPPLVLPQAPSGSGSGGVASGDVGDEN. Residues 206 to 237 adopt a coiled-coil conformation; the sequence is GDVGDENERLRRENAQLARELSQMRKLCNNIL. The segment at 215–244 is hydrophobic repeat HR-A/B; it reads LRRENAQLARELSQMRKLCNNILLLMSKYA. The short motif at 318–322 is the Nuclear localization signal element; that stretch reads RKRMR. The tract at residues 322–363 is disordered; the sequence is RHDGGGDDDHAATVKAEPMDGRPHGKDEQSAETQAWPIYRPR. A compositionally biased stretch (basic and acidic residues) spans 323 to 350; it reads HDGGGDDDHAATVKAEPMDGRPHGKDEQ.

It belongs to the HSF family. Class B subfamily. As to quaternary structure, homotrimer. Post-translationally, exhibits temperature-dependent phosphorylation.

The protein localises to the nucleus. In terms of biological role, transcriptional regulator that specifically binds DNA of heat shock promoter elements (HSE). In Oryza sativa subsp. japonica (Rice), this protein is Heat stress transcription factor B-2b (HSFB2B).